Here is a 204-residue protein sequence, read N- to C-terminus: ATP-dependent Clp protease proteolytic subunit (204 aa).

The Nucleophile role is filled by serine 101. Histidine 126 is a catalytic residue.

Belongs to the peptidase S14 family. As to quaternary structure, component of the chloroplastic Clp protease core complex.

The protein resides in the plastid. Its subcellular location is the chloroplast stroma. It catalyses the reaction Hydrolysis of proteins to small peptides in the presence of ATP and magnesium. alpha-casein is the usual test substrate. In the absence of ATP, only oligopeptides shorter than five residues are hydrolyzed (such as succinyl-Leu-Tyr-|-NHMec, and Leu-Tyr-Leu-|-Tyr-Trp, in which cleavage of the -Tyr-|-Leu- and -Tyr-|-Trp bonds also occurs).. In terms of biological role, cleaves peptides in various proteins in a process that requires ATP hydrolysis. Has a chymotrypsin-like activity. Plays a major role in the degradation of misfolded proteins. This is ATP-dependent Clp protease proteolytic subunit from Phalaenopsis aphrodite subsp. formosana (Moth orchid).